The chain runs to 548 residues: Aspergilol synthase AuAP450 (548 aa).

A helical transmembrane segment spans residues 38-58 (PQLVITTLGALLLAAFYLLPS). C489 provides a ligand contact to heme.

This sequence belongs to the cytochrome P450 family. Requires heme as cofactor.

It is found in the membrane. Its pathway is secondary metabolite biosynthesis; terpenoid biosynthesis. Cytochrome P450 monooxygenase; part of the gene cluster that mediates the biosynthesis of aspergiltriene A, aspergildienes A-D and aspergilols A-D. The bifunctional terpene synthase AuAS converts DMAPP and IPP into sesterterpenes. The C-terminal prenyltransferase (PT) domain of AuAS catalyzes formation of GFPP, whereas the N-terminal terpene cyclase (TC) domain catalyzes the cyclization of GFPP into 5 distinct sesterterpenes: aspergiltriene A, aspergildiene A, aspergildiene B, aspergildiene C and aspergildiene D. The cytochrome P450 monooxygenase AP450 then hydroxylates the aspergildienes A, B, C and D to yield the corresponding sesterterpene alcohols, aspergilols A-D. This is Aspergilol synthase AuAP450 from Aspergillus ustus.